We begin with the raw amino-acid sequence, 130 residues long: Small ribosomal subunit protein uS9 (130 aa).

The protein belongs to the universal ribosomal protein uS9 family.

This Saccharophagus degradans (strain 2-40 / ATCC 43961 / DSM 17024) protein is Small ribosomal subunit protein uS9.